The sequence spans 239 residues: Fatty acid metabolism regulator protein (239 aa).

In terms of domain architecture, HTH gntR-type spans 6-74 (QSPAGFAEEY…HGKPTKVNNF (69 aa)). A DNA-binding region (H-T-H motif) is located at residues 34–53 (ERELSELIGVTRTTLREVLQ).

As to quaternary structure, homodimer.

It localises to the cytoplasm. Multifunctional regulator of fatty acid metabolism. In Yersinia pseudotuberculosis serotype O:1b (strain IP 31758), this protein is Fatty acid metabolism regulator protein.